Consider the following 368-residue polypeptide: Glutamate 5-kinase (368 aa).

Lysine 10 is a binding site for ATP. Residues serine 50, aspartate 137, and asparagine 149 each contribute to the substrate site. 169 to 170 (TD) contacts ATP. The 79-residue stretch at 276–354 (RGTLVLDDGA…ESIVRELGYM (79 aa)) folds into the PUA domain.

Belongs to the glutamate 5-kinase family.

Its subcellular location is the cytoplasm. It carries out the reaction L-glutamate + ATP = L-glutamyl 5-phosphate + ADP. The protein operates within amino-acid biosynthesis; L-proline biosynthesis; L-glutamate 5-semialdehyde from L-glutamate: step 1/2. Its function is as follows. Catalyzes the transfer of a phosphate group to glutamate to form L-glutamate 5-phosphate. In Pseudomonas savastanoi pv. phaseolicola (strain 1448A / Race 6) (Pseudomonas syringae pv. phaseolicola (strain 1448A / Race 6)), this protein is Glutamate 5-kinase.